We begin with the raw amino-acid sequence, 205 residues long: Guanylate kinase (205 aa).

The region spanning 6–185 (GLLIVLSGPS…ACERIKAIVV (180 aa)) is the Guanylate kinase-like domain. 13–20 (GPSGVGKG) contributes to the ATP binding site.

The protein belongs to the guanylate kinase family.

Its subcellular location is the cytoplasm. The catalysed reaction is GMP + ATP = GDP + ADP. Functionally, essential for recycling GMP and indirectly, cGMP. The chain is Guanylate kinase from Bacillus anthracis.